The chain runs to 620 residues: Probable indole-3-acetic acid-amido synthetase GH3.7 (620 aa).

It belongs to the IAA-amido conjugating enzyme family. Ubiquitous.

In terms of biological role, may catalyze the synthesis of indole-3-acetic acid (IAA)-amino acid conjugates, providing a mechanism for the plant to cope with the presence of excess auxin. The sequence is that of Probable indole-3-acetic acid-amido synthetase GH3.7 (GH3.7) from Oryza sativa subsp. japonica (Rice).